A 325-amino-acid polypeptide reads, in one-letter code: MADKQRKKVILVGDGAVGSSYAFALVNQGIAQELGIVDLFKEKTQGDAEDLSHALAFTSPKKIYSADYSDASDADLVVLTSGAPQKPGETRLDLVEKNLRITKDVVTKIVASGFKGIFLVAANPVDILTYATWKFSGFPKNRVVGSGTSLDTARFRQALAEKVDVDARSIHAYIMGEHGDSEFAVWSHANVAGVKLEQWFQENDYLNEAEIVELFESVRDAAYSIIAKKGATFYGVAVALARITKAILDDEHAVLPVSVFQDGQYGVSDCYLGQPAVVGAEGVVNPIHIPLNDAEMQKMEASGAQLKAIIDEAFAKEEFASAVKN.

Residues valine 17, aspartate 38, lysine 43, tyrosine 68, and 82–83 (GA) contribute to the NAD(+) site. Residues glutamine 85, arginine 91, and 123 to 126 (NPVD) each bind substrate. NAD(+) is bound by residues 121-123 (AAN) and serine 146. Position 151–154 (151–154 (DTAR)) interacts with substrate. Arginine 156 and histidine 171 together coordinate beta-D-fructose 1,6-bisphosphate. Histidine 178 functions as the Proton acceptor in the catalytic mechanism. Tyrosine 223 bears the Phosphotyrosine mark. Threonine 232 contacts substrate.

It belongs to the LDH/MDH superfamily. LDH family. As to quaternary structure, homotetramer.

The protein resides in the cytoplasm. It catalyses the reaction (S)-lactate + NAD(+) = pyruvate + NADH + H(+). Its pathway is fermentation; pyruvate fermentation to lactate; (S)-lactate from pyruvate: step 1/1. Its activity is regulated as follows. Allosterically activated by fructose 1,6-bisphosphate (FBP). Functionally, catalyzes the conversion of lactate to pyruvate. The sequence is that of L-lactate dehydrogenase 1 from Lactococcus lactis subsp. lactis (strain IL1403) (Streptococcus lactis).